We begin with the raw amino-acid sequence, 344 residues long: AI-2 transport protein TqsA (344 aa).

Topologically, residues 1 to 4 are cytoplasmic; it reads MAKP. A helical transmembrane segment spans residues 5–25; it reads IITLNGLKIVIMLGMLVIILC. Residues 26 to 30 are Periplasmic-facing; that stretch reads GIRFA. The chain crosses the membrane as a helical span at residues 31-51; it reads AEIIVPFILALFIAVILNPLV. The Cytoplasmic portion of the chain corresponds to 52–61; the sequence is QHMVRWRVPR. Residues 62 to 82 form a helical membrane-spanning segment; it reads VLAVSILMTIIVMAMVLLLAY. Over 83–149 the chain is Periplasmic; that stretch reads LGSALNELTR…LLTQLSNAMS (67 aa). The chain crosses the membrane as a helical span at residues 150–170; sequence SIFLLLLTVLFMLLEVPQLPG. The Cytoplasmic segment spans residues 171–196; the sequence is KFQQMMARPVEGMAAIQRAIDSVSHY. The helical transmembrane segment at 197–217 threads the bilayer; it reads LVLKTAISIITGLVAWAMLAA. The Periplasmic segment spans residues 218-221; it reads LDVR. Residues 222-242 form a helical membrane-spanning segment; sequence FAFVWGLLAFALNYIPNIGSV. The Cytoplasmic segment spans residues 243–257; the sequence is LAAIPPIAQVLVFNG. A helical transmembrane segment spans residues 258–278; that stretch reads FYEALLVLAGYLLINLVFGNI. Over 279-292 the chain is Periplasmic; the sequence is LEPRIMGRGLGLST. A helical transmembrane segment spans residues 293–313; sequence LVVFLSLIFWGWLLGPVGMLL. The Cytoplasmic portion of the chain corresponds to 314–344; that stretch reads SVPLTIIVKIALEQTAGGQSIAVLLSDLNKE.

It belongs to the autoinducer-2 exporter (AI-2E) (TC 2.A.86) family.

Its subcellular location is the cell inner membrane. It catalyses the reaction (2R,4S)-2-methyltetrahydrofuran-2,3,3,4-tetrol(in) = (2R,4S)-2-methyltetrahydrofuran-2,3,3,4-tetrol(out). Its function is as follows. Involved in the transport of the quorum-sensing signal autoinducer 2 (AI-2). Controls the transport of AI-2 either by enhancing its secretion or inhibiting its uptake and consequently represses biofilm formation and motility and affects the global gene expression in biofilms. The protein is AI-2 transport protein TqsA of Escherichia coli (strain K12).